A 427-amino-acid chain; its full sequence is Isocitrate lyase (427 aa).

Position 89-91 (89-91 (SGW)) interacts with substrate. Aspartate 150 provides a ligand contact to Mg(2+). Cysteine 188 (proton acceptor) is an active-site residue. Residues 189–190 (GH), arginine 225, 310–314 (NCSPS), and threonine 344 each bind substrate.

This sequence belongs to the isocitrate lyase/PEP mutase superfamily. Isocitrate lyase family. Homotetramer. It depends on Mg(2+) as a cofactor.

The enzyme catalyses D-threo-isocitrate = glyoxylate + succinate. The protein operates within carbohydrate metabolism; glyoxylate cycle; (S)-malate from isocitrate: step 1/2. Its function is as follows. Involved in the metabolic adaptation in response to environmental changes. Catalyzes the reversible formation of succinate and glyoxylate from isocitrate, a key step of the glyoxylate cycle, which operates as an anaplerotic route for replenishing the tricarboxylic acid cycle during growth on fatty acid substrates. The sequence is that of Isocitrate lyase (aceA) from Halalkalibacterium halodurans (strain ATCC BAA-125 / DSM 18197 / FERM 7344 / JCM 9153 / C-125) (Bacillus halodurans).